Consider the following 67-residue polypeptide: Large ribosomal subunit protein bL35 (67 aa).

Belongs to the bacterial ribosomal protein bL35 family.

This Novosphingobium aromaticivorans (strain ATCC 700278 / DSM 12444 / CCUG 56034 / CIP 105152 / NBRC 16084 / F199) protein is Large ribosomal subunit protein bL35.